A 190-amino-acid chain; its full sequence is Elongation factor P 2 (190 aa).

Belongs to the elongation factor P family.

It is found in the cytoplasm. Its pathway is protein biosynthesis; polypeptide chain elongation. Functionally, involved in peptide bond synthesis. Stimulates efficient translation and peptide-bond synthesis on native or reconstituted 70S ribosomes in vitro. Probably functions indirectly by altering the affinity of the ribosome for aminoacyl-tRNA, thus increasing their reactivity as acceptors for peptidyl transferase. The protein is Elongation factor P 2 (efp2) of Protochlamydia amoebophila (strain UWE25).